A 324-amino-acid chain; its full sequence is tRNA U34 carboxymethyltransferase (324 aa).

Residues Lys92, Trp106, Lys111, Gly131, Leu181–Glu182, Met197, Tyr201, and Arg316 contribute to the carboxy-S-adenosyl-L-methionine site.

It belongs to the class I-like SAM-binding methyltransferase superfamily. CmoB family. In terms of assembly, homotetramer.

It carries out the reaction carboxy-S-adenosyl-L-methionine + 5-hydroxyuridine(34) in tRNA = 5-carboxymethoxyuridine(34) in tRNA + S-adenosyl-L-homocysteine + H(+). Functionally, catalyzes carboxymethyl transfer from carboxy-S-adenosyl-L-methionine (Cx-SAM) to 5-hydroxyuridine (ho5U) to form 5-carboxymethoxyuridine (cmo5U) at position 34 in tRNAs. This chain is tRNA U34 carboxymethyltransferase, found in Syntrophotalea carbinolica (strain DSM 2380 / NBRC 103641 / GraBd1) (Pelobacter carbinolicus).